A 393-amino-acid polypeptide reads, in one-letter code: MAVIKMTDLDLKGKRVLLREDLNVPLKEGRITSDKRIRAALPSIRMAMEAGGRVLIVSHLGRPVEGEFDEAFSLAPVAAHLSRELGRDVRLVKDYIDGVDVAEGDCVLCENVRFLKGEKKNTEELGRRLAALCDIFVMDAFGAAHRAQASTHAVARFAPVACAGPLLAAELDALERALDAPKHPLVGIIGGSKVSTKLTLLDNLSHRVDRLIVGGGIANNFIKAAGYEVGKSLYEPELVEEAARLMAAARAAGGEIPVPLDVVVGPELADGAPATVRKVSEVGPDEMILDIGPATAALYREILLAAGTIVWNGPVGAFEWEQFGAGTRALCEAVADSPAFSIAGGGDTVAAVEKYGVASRVGYISTGGGAFLEFLEGKELPAVAILQERAAQS.

Substrate-binding positions include 21–23 (DLN), Arg-36, 59–62 (HLGR), Arg-113, and Arg-146. ATP contacts are provided by residues Lys-197, Glu-319, and 345-348 (GGDT).

Belongs to the phosphoglycerate kinase family. As to quaternary structure, monomer.

The protein resides in the cytoplasm. The catalysed reaction is (2R)-3-phosphoglycerate + ATP = (2R)-3-phospho-glyceroyl phosphate + ADP. It participates in carbohydrate degradation; glycolysis; pyruvate from D-glyceraldehyde 3-phosphate: step 2/5. The sequence is that of Phosphoglycerate kinase from Nitratidesulfovibrio vulgaris (strain DP4) (Desulfovibrio vulgaris).